The primary structure comprises 368 residues: Trans-enoyl reductase thnE (368 aa).

NADP(+) is bound at residue 53–56; the sequence is VDVK. 140–147 contacts substrate; it reads LATATAAY. NADP(+) contacts are provided by residues 179–182, 202–205, Tyr220, and 267–268; these read STAT, SPSN, and VE. 289 to 293 is a substrate binding site; sequence VMTVW. NADP(+) is bound at residue 358 to 359; sequence PS.

It belongs to the zinc-containing alcohol dehydrogenase family. As to quaternary structure, monomer.

The catalysed reaction is malate + 6 malonyl-CoA + acetyl-CoA + 2 AH2 + 2 S-adenosyl-L-methionine + 5 NADPH + 9 H(+) = trihazone A + 2 A + 2 S-adenosyl-L-homocysteine + 6 CO2 + 5 NADP(+) + 7 CoA + 6 H2O. It functions in the pathway secondary metabolite biosynthesis. Its function is as follows. Trans-enoyl reductase; part of the gene cluster that produces the tetronate natural products trihazones. The PKS-NRPS synthetase thnA with the help of the trans-enoyl reductase thnE are responsible for the synthesis of the carboxylmethyl containing trihazone A. The PKS portion of thnA synthesizes beta-keto-triene chain from one acetyl-CoA and 6 equivalents of malonyl-CoA, in collaboration with thnE, which selectively reduces the enoyl intermediate during the first and fourth iteration of the PKS. The NRPS domain selects and activates malate, of which the alpha-hydroxyl group attacks the completed polyketide acyl-S-ACP chain to form the ester product. Intramolecular Dieckmann cyclization catalyzed by the terminal reductase domain releases the product as trihazone A from the PKS-NPRS. The pathway begins with the formation of trihazone A by the hybrid PKS-NRPS synthetase thnA and the trans-enoyl reductase thnE. Trihazone A is further decarboxylated by the 2-oxoglutarate-dependent dioxygenase thnC to produce trihazone D. The function of the FAD-dependent monooxygenase thnD has still to be identified. This is Trans-enoyl reductase thnE from Trichoderma harzianum (Hypocrea lixii).